The primary structure comprises 291 residues: uncharacterized protein (291 aa).

Solcar repeat units lie at residues 15-93 (PGPV…IKKS), 104-190 (PRTV…IKQS), and 201-287 (LSTV…VMEI). The next 6 membrane-spanning stretches (helical) occupy residues 21–41 (IIAGGVAGAIEISITYPAEFA), 70–90 (STVIVGNSLKAAVRFFAFDSI), 108–128 (LAGLGAGVAESVLVLTPFESI), 169–189 (TVARQAANSGVRFTAYNSIKQ), 201–221 (LSTVTTFLVGSVAGIITVYCT), and 259–280 (FWSGATPRLARLILSGGIVFTV).

This sequence belongs to the mitochondrial carrier (TC 2.A.29) family.

Its subcellular location is the mitochondrion inner membrane. This is an uncharacterized protein from Schizosaccharomyces pombe (strain 972 / ATCC 24843) (Fission yeast).